The chain runs to 81 residues: Large ribosomal subunit protein bL27 (81 aa).

The span at 1–11 (MATSKSGGSSK) shows a compositional bias: polar residues. A disordered region spans residues 1–26 (MATSKSGGSSKNGRDSISKRLGVKRS).

Belongs to the bacterial ribosomal protein bL27 family.

The chain is Large ribosomal subunit protein bL27 from Borrelia turicatae (strain 91E135).